Consider the following 638-residue polypeptide: E3 ubiquitin-protein ligase TRIM47 (638 aa).

M1 bears the N-acetylmethionine mark. Residues 9-58 (CPICLEPLREPVTLPCGHNFCLACLGALWPHRGASGAGGPGGAARCPLCQ) form an RING-type zinc finger. T72 carries the phosphothreonine modification. Residues 79–119 (LRQGSGPGSGPGPAPALAPEPSAPSALPSVPEPSAPCAPEP) are disordered. Pro residues-rich tracts occupy residues 88 to 100 (GPGPAPALAPEPS) and 108 to 119 (VPEPSAPCAPEP). A B box-type zinc finger spans residues 177-217 (LEESLCPRHLRPLERYCRAERVCLCEACAAQEHRGHELVPL). Zn(2+) is bound by residues C182, H185, C204, and H209. Positions 296 to 324 (MLGRSQGDLRRQEEQRSRLSRARQNLSQV) form a coiled coil. Disordered stretches follow at residues 300–322 (SQGDLRRQEEQRSRLSRARQNLS) and 384–411 (LRGPGGNEDGPQKLDSEADAEPQDLEST). The segment covering 302 to 312 (GDLRRQEEQRS) has biased composition (basic and acidic residues). The B30.2/SPRY domain occupies 410-631 (STNLLESEAP…LQIGPLKKSC (222 aa)). Position 461 is a phosphoserine (S461). R582 carries the post-translational modification Omega-N-methylarginine. At S588 the chain carries Phosphoserine.

The protein belongs to the TRIM/RBCC family. Low expression in most tissues. Higher expression in kidney tubular cells. Overexpressed in astrocytoma tumor cells.

The protein localises to the cytoplasm. It localises to the nucleus. It catalyses the reaction S-ubiquitinyl-[E2 ubiquitin-conjugating enzyme]-L-cysteine + [acceptor protein]-L-lysine = [E2 ubiquitin-conjugating enzyme]-L-cysteine + N(6)-ubiquitinyl-[acceptor protein]-L-lysine.. It participates in protein modification; protein ubiquitination. Its function is as follows. E3 ubiquitin-protein ligase that mediates the ubiquitination and proteasomal degradation of CYLD. The sequence is that of E3 ubiquitin-protein ligase TRIM47 from Homo sapiens (Human).